The following is a 147-amino-acid chain: Phospholipase A2-beta (147 aa).

An N-terminal signal peptide occupies residues 1 to 28; it reads MMFRTSLMRFAAAFFAIVFVVLVGVARS. 6 disulfides stabilise this stretch: Cys-31/Cys-58, Cys-35/Cys-64, Cys-40/Cys-117, Cys-51/Cys-71, Cys-70/Cys-95, and Cys-77/Cys-88. Tyr-50, Gly-52, and His-55 together coordinate Ca(2+). His-74 is a catalytic residue. Residue Asp-75 participates in Ca(2+) binding. The short motif at 144 to 147 is the Prevents secretion from ER element; that stretch reads KTEL.

Belongs to the phospholipase A2 family. The cofactor is Ca(2+). As to expression, ubiquitous but expressed at a low level. Detected in vascular tissues and in the guard cells. Predominantly detected in pollen.

It is found in the secreted. Its subcellular location is the endoplasmic reticulum. It carries out the reaction a 1,2-diacyl-sn-glycero-3-phosphocholine + H2O = a 1-acyl-sn-glycero-3-phosphocholine + a fatty acid + H(+). Its activity is regulated as follows. Inhibited by aristolochic acid. PA2 catalyzes the calcium-dependent hydrolysis of the 2-acyl groups in 3-sn-phosphoglycerides. Releases lysophospholipids (LPLs) and free fatty acids (FFAs) from membrane phospholipids in response to hormones and other external stimuli. Regulates the process of cell elongation and plays important roles in shoot gravitropism by mediating auxin-induced cell elongation. Involved in stomatal opening in response to light. Plays a role in pollen development and germination and tube growth. The chain is Phospholipase A2-beta (PLA2-BETA) from Arabidopsis thaliana (Mouse-ear cress).